Reading from the N-terminus, the 311-residue chain is Putative S-adenosyl-L-methionine-dependent methyltransferase MMAR_0358 (311 aa).

Residues aspartate 132 and 161 to 162 (DL) contribute to the S-adenosyl-L-methionine site.

This sequence belongs to the UPF0677 family.

Exhibits S-adenosyl-L-methionine-dependent methyltransferase activity. This is Putative S-adenosyl-L-methionine-dependent methyltransferase MMAR_0358 from Mycobacterium marinum (strain ATCC BAA-535 / M).